A 400-amino-acid polypeptide reads, in one-letter code: MSHRVLGTERISPREEHVLTPNVTAILVAAGRGTRAGGGLAKQWRPLGARRVIDWTLAAFDRATQVSELLVVLHPEDMDLAATLTAAKPLRCVSGGATRSASVACALAAVADPEAIVLIHDAARPVVSADLIARVVAGVIETGAAAPALPVVDALWTGAGDRVTGMQPRDGLYRAQTPQGFHAGAIRDAHAAATGAAADDVEIARAAGMPVAIVAGDEQNFKITYPQDFARAAALLKERDKMDIRTGNGYDVHRFGTGDAVILCGVEVPHDRALMGHSDADVGMHAVTDAIYGALGDGDIGQHFPPSDPQWKGAASEIFLRHAVALAAERGYTITHMDCTLVCERPKIGPYHAVMKAKMSELMGLQPDQVSVKATTSERLGFTGREEGIAALATVTLVRT.

The segment at 1–244 (MSHRVLGTER…LLKERDKMDI (244 aa)) is 2-C-methyl-D-erythritol 4-phosphate cytidylyltransferase. The interval 245–400 (RTGNGYDVHR…ALATVTLVRT (156 aa)) is 2-C-methyl-D-erythritol 2,4-cyclodiphosphate synthase. The a divalent metal cation site is built by Asp251 and His253. 4-CDP-2-C-methyl-D-erythritol 2-phosphate contacts are provided by residues 251 to 253 (DVH) and 277 to 278 (HS). His285 contributes to the a divalent metal cation binding site. 4-CDP-2-C-methyl-D-erythritol 2-phosphate contacts are provided by residues 299-301 (DIG), 375-378 (TTSE), Phe382, and Arg385.

This sequence in the N-terminal section; belongs to the IspD/TarI cytidylyltransferase family. IspD subfamily. It in the C-terminal section; belongs to the IspF family. A divalent metal cation is required as a cofactor.

The catalysed reaction is 2-C-methyl-D-erythritol 4-phosphate + CTP + H(+) = 4-CDP-2-C-methyl-D-erythritol + diphosphate. The enzyme catalyses 4-CDP-2-C-methyl-D-erythritol 2-phosphate = 2-C-methyl-D-erythritol 2,4-cyclic diphosphate + CMP. It participates in isoprenoid biosynthesis; isopentenyl diphosphate biosynthesis via DXP pathway; isopentenyl diphosphate from 1-deoxy-D-xylulose 5-phosphate: step 2/6. The protein operates within isoprenoid biosynthesis; isopentenyl diphosphate biosynthesis via DXP pathway; isopentenyl diphosphate from 1-deoxy-D-xylulose 5-phosphate: step 4/6. Functionally, bifunctional enzyme that catalyzes the formation of 4-diphosphocytidyl-2-C-methyl-D-erythritol from CTP and 2-C-methyl-D-erythritol 4-phosphate (MEP) (IspD), and catalyzes the conversion of 4-diphosphocytidyl-2-C-methyl-D-erythritol 2-phosphate (CDP-ME2P) to 2-C-methyl-D-erythritol 2,4-cyclodiphosphate (ME-CPP) with a corresponding release of cytidine 5-monophosphate (CMP) (IspF). The protein is Bifunctional enzyme IspD/IspF of Dinoroseobacter shibae (strain DSM 16493 / NCIMB 14021 / DFL 12).